We begin with the raw amino-acid sequence, 57 residues long: Exactin (57 aa).

4 disulfides stabilise this stretch: C3–C19, C12–C37, C41–C49, and C50–C55.

This sequence belongs to the three-finger toxin family. Short-chain subfamily. Orphan group XX sub-subfamily. Expressed by the venom gland.

Its subcellular location is the secreted. In terms of biological role, anticoagulant protein that prevents the activation of factor X (F10). It acts by potently inhibiting the extrinsic tenase complex (ETC) (IC(50)=116.49 nM), a complex composed by active factor VII (F7a), tissue factor (TF) and F10. In addition, it shows weaker activities on other complexes. It weakly inhibits F10 activation by inhibiting the intrinsic tenase complex (IC(50)=4.05 uM), a complex composed by active factor IX (IXa, F9a), its cofactor factor VIII (VIIIa, F8a), and their substrate F10. It also weakly prevents prothrombin activation by inhibiting the prothrombinase complex (IC(50)=17.66 uM). It shows high kinetic constant towards F7a/TF/F10/phospholipids complex (Ki=30.62 nM) and lower kinetic constant towards F7a/TF/phospholipids complex (Ki=153.75 nM). The chain is Exactin from Hemachatus haemachatus (Rinkhals).